A 521-amino-acid polypeptide reads, in one-letter code: Cytokinin dehydrogenase 9 (521 aa).

The signal sequence occupies residues 1 to 22 (MRPSLLQYLKLLLLLALGGVTT). N-linked (GlcNAc...) asparagine glycosylation occurs at N57. The FAD-binding PCMH-type domain occupies 59–237 (SSFPPVAVLH…TRARIPLEPA (179 aa)). 3 residues coordinate FAD: A95, G97, and G99. A Pros-8alpha-FAD histidine modification is found at H100. The FAD site is built by S101, Q105, D161, T166, S172, V176, and I227. Residues N278, N412, and N418 are each glycosylated (N-linked (GlcNAc...) asparagine). Y469 serves as a coordination point for FAD. N472 carries N-linked (GlcNAc...) asparagine glycosylation. Residue Q507 coordinates FAD.

This sequence belongs to the oxygen-dependent FAD-linked oxidoreductase family. As to quaternary structure, monomer. Requires FAD as cofactor. As to expression, expressed in inflorescence meristems.

The protein resides in the secreted. It localises to the extracellular space. The protein localises to the cytoplasm. Its subcellular location is the cytosol. It is found in the nucleus. It catalyses the reaction N(6)-dimethylallyladenine + A + H2O = 3-methyl-2-butenal + adenine + AH2. Its function is as follows. Catalyzes the oxidation of cytokinins, a family of N(6)-substituted adenine derivatives that are plant hormones, where the substituent is an isopentenyl group. Possesses cytokinin oxidase activity toward trans-zeatin (tZ) and N6-(2-isopentenyl)adenine (2iP) in vitro. Functions as a primary strigolactone-responsive gene to regulate rice tillering, plant height, and panicle size, likely via a secondary response gene, RR5, which encodes a cytokinin-inducible rice type-A response regulator that seems to act as negative regulator of the cytokinin signaling. This chain is Cytokinin dehydrogenase 9, found in Oryza sativa subsp. japonica (Rice).